A 352-amino-acid polypeptide reads, in one-letter code: Protein RecA (352 aa).

ATP is bound at residue 65 to 72; it reads GPESSGKT. A disordered region spans residues 332–352; the sequence is EEVEKADVKKDAKKDAAEALK. Residues 333-352 are compositionally biased toward basic and acidic residues; that stretch reads EVEKADVKKDAKKDAAEALK.

It belongs to the RecA family.

The protein localises to the cytoplasm. Functionally, can catalyze the hydrolysis of ATP in the presence of single-stranded DNA, the ATP-dependent uptake of single-stranded DNA by duplex DNA, and the ATP-dependent hybridization of homologous single-stranded DNAs. It interacts with LexA causing its activation and leading to its autocatalytic cleavage. This chain is Protein RecA, found in Photobacterium profundum (strain SS9).